The primary structure comprises 270 residues: B3 domain-containing protein Os03g0212300 (270 aa).

2 consecutive DNA-binding regions (TF-B3) follow at residues 13–110 (FEFF…FDET) and 158–265 (VTLR…RKAD).

The protein localises to the nucleus. In Oryza sativa subsp. japonica (Rice), this protein is B3 domain-containing protein Os03g0212300.